Consider the following 348-residue polypeptide: NADH-ubiquinone oxidoreductase chain 2 (348 aa).

10 consecutive transmembrane segments (helical) span residues 3–23 (PFIL…TFAS), 24–44 (SHWL…IPLM), 60–80 (FITQ…NAWI), 95–115 (ASML…HFWL), 136–156 (LAPF…ITFL), 177–197 (ILAY…QFNQ), 198–218 (QLAL…FMIF), 239–259 (LTAI…LSGF), 273–293 (DIPL…YFYL), and 325–345 (LAIS…TLAL).

It belongs to the complex I subunit 2 family.

Its subcellular location is the mitochondrion inner membrane. The catalysed reaction is a ubiquinone + NADH + 5 H(+)(in) = a ubiquinol + NAD(+) + 4 H(+)(out). Functionally, core subunit of the mitochondrial membrane respiratory chain NADH dehydrogenase (Complex I) that is believed to belong to the minimal assembly required for catalysis. Complex I functions in the transfer of electrons from NADH to the respiratory chain. The immediate electron acceptor for the enzyme is believed to be ubiquinone. In Gadus morhua (Atlantic cod), this protein is NADH-ubiquinone oxidoreductase chain 2 (MT-ND2).